The following is a 456-amino-acid chain: Exodeoxyribonuclease 7 large subunit (456 aa).

It belongs to the XseA family. In terms of assembly, heterooligomer composed of large and small subunits.

The protein resides in the cytoplasm. The enzyme catalyses Exonucleolytic cleavage in either 5'- to 3'- or 3'- to 5'-direction to yield nucleoside 5'-phosphates.. Functionally, bidirectionally degrades single-stranded DNA into large acid-insoluble oligonucleotides, which are then degraded further into small acid-soluble oligonucleotides. This is Exodeoxyribonuclease 7 large subunit from Lactobacillus delbrueckii subsp. bulgaricus (strain ATCC BAA-365 / Lb-18).